Consider the following 118-residue polypeptide: Small ribosomal subunit protein uS11 (118 aa).

Belongs to the universal ribosomal protein uS11 family. As to quaternary structure, part of the 30S ribosomal subunit. Interacts with proteins S7 and S18. Binds to IF-3.

Its function is as follows. Located on the platform of the 30S subunit, it bridges several disparate RNA helices of the 16S rRNA. Forms part of the Shine-Dalgarno cleft in the 70S ribosome. The polypeptide is Small ribosomal subunit protein uS11 (Carsonella ruddii (strain PV)).